A 318-amino-acid polypeptide reads, in one-letter code: 2-keto-3-deoxygluconate permease (318 aa).

The next 10 membrane-spanning stretches (helical) occupy residues 10–30 (IPGGLMLVPLFLGALCNTFTP), 42–62 (GLITGTIPILAVWFFCMGASI), 76–96 (VLVVTKIATAWVVALIAGTFL), 105–125 (MLAGISVLALVAAMDMTNGGL), 139–159 (AGAFVLMSLESGPLMTMVILG), 163–183 (IATFEPQLFVGAVLPFLIGFA), 199–219 (VQTLIPFFAFALGNTINLSVI), 224–244 (FAGIFLGLLVIVVTGIPLILA), 263–283 (AGAAVATPLLIANMAPEFAPV), and 289–309 (ALVATSVIVTSVLVPIITALW).

The protein belongs to the KdgT transporter family.

Its subcellular location is the cell inner membrane. It carries out the reaction 2-dehydro-3-deoxy-D-gluconate(in) + H(+)(in) = 2-dehydro-3-deoxy-D-gluconate(out) + H(+)(out). Catalyzes the proton-dependent uptake of 2-keto-3-deoxygluconate (KDG) into the cell. This Pectobacterium carotovorum subsp. carotovorum (Erwinia carotovora subsp. carotovora) protein is 2-keto-3-deoxygluconate permease.